Here is a 152-residue protein sequence, read N- to C-terminus: Endoribonuclease YbeY (152 aa).

The Zn(2+) site is built by histidine 113, histidine 117, and histidine 123.

It belongs to the endoribonuclease YbeY family. Zn(2+) is required as a cofactor.

The protein resides in the cytoplasm. Functionally, single strand-specific metallo-endoribonuclease involved in late-stage 70S ribosome quality control and in maturation of the 3' terminus of the 16S rRNA. The sequence is that of Endoribonuclease YbeY from Pseudoalteromonas atlantica (strain T6c / ATCC BAA-1087).